The following is a 231-amino-acid chain: NADH-ubiquinone oxidoreductase chain 4 (231 aa).

The next 6 membrane-spanning stretches (helical) occupy residues Pro-1–Ile-21, Met-34–Leu-54, Ile-63–Gly-85, Gly-89–Tyr-111, Ile-118–Leu-138, and Leu-156–Ser-176.

The protein belongs to the complex I subunit 4 family.

It localises to the mitochondrion membrane. The enzyme catalyses a ubiquinone + NADH + 5 H(+)(in) = a ubiquinol + NAD(+) + 4 H(+)(out). Its function is as follows. Core subunit of the mitochondrial membrane respiratory chain NADH dehydrogenase (Complex I) that is believed to belong to the minimal assembly required for catalysis. Complex I functions in the transfer of electrons from NADH to the respiratory chain. The immediate electron acceptor for the enzyme is believed to be ubiquinone. The protein is NADH-ubiquinone oxidoreductase chain 4 (MT-ND4) of Calloselasma rhodostoma (Malayan pit viper).